A 469-amino-acid chain; its full sequence is Interstitial collagenase (469 aa).

Positions 1-18 (MPRLPLLLLLLWGTGSHG) are cleaved as a signal peptide. Positions 19 to 99 (FPAATSETQE…PRCGVPDVAP (81 aa)) are cleaved as a propeptide — activation peptide. Residues 90–97 (PRCGVPDV) carry the Cysteine switch motif. A Zn(2+)-binding site is contributed by Cys-92. N-linked (GlcNAc...) asparagine glycosylation occurs at Asn-120. Residues Asp-124 and Asp-158 each coordinate Ca(2+). 2 residues coordinate Zn(2+): His-168 and Asp-170. Ca(2+) is bound by residues Asp-175, Gly-176, Gly-178, and Asn-180. Position 183 (His-183) interacts with Zn(2+). Positions 190, 192, and 194 each coordinate Ca(2+). His-196 contributes to the Zn(2+) binding site. Residues Asp-198, Asp-199, and Glu-201 each contribute to the Ca(2+) site. His-218 contributes to the Zn(2+) binding site. Glu-219 is an active-site residue. Residues His-222 and His-228 each coordinate Zn(2+). Thr-274 carries the post-translational modification Phosphothreonine. Hemopexin repeat units follow at residues 275-324 (PEVC…WPQL), 325-371 (PNGL…FGFP), 374-422 (VKSI…FPGI), and 423-466 (GNKV…WFNC). Cys-278 and Cys-466 are disulfide-bonded. Residues Asp-285 and Gln-329 each coordinate Ca(2+). Tyr-360 carries the post-translational modification Phosphotyrosine; by PKDCC. Ca(2+)-binding residues include Asp-378 and Asp-427.

This sequence belongs to the peptidase M10A family. Requires Ca(2+) as cofactor. It depends on Zn(2+) as a cofactor. Post-translationally, tyrosine phosphorylated in platelets by PKDCC/VLK.

Its subcellular location is the secreted. It is found in the extracellular space. The protein resides in the extracellular matrix. It carries out the reaction Cleavage of the triple helix of collagen at about three-quarters of the length of the molecule from the N-terminus, at 775-Gly-|-Ile-776 in the alpha1(I) chain. Cleaves synthetic substrates and alpha-macroglobulins at bonds where P1' is a hydrophobic residue.. Can be activated without removal of the activation peptide. Cleaves collagens of types I, II, and III at one site in the helical domain. Also cleaves collagens of types VII and X. This is Interstitial collagenase (MMP1) from Bos taurus (Bovine).